The following is a 275-amino-acid chain: 2,3,4,5-tetrahydropyridine-2,6-dicarboxylate N-succinyltransferase (275 aa).

Residues arginine 108 and aspartate 145 each coordinate substrate.

Belongs to the transferase hexapeptide repeat family. As to quaternary structure, homotrimer.

It is found in the cytoplasm. The catalysed reaction is (S)-2,3,4,5-tetrahydrodipicolinate + succinyl-CoA + H2O = (S)-2-succinylamino-6-oxoheptanedioate + CoA. It participates in amino-acid biosynthesis; L-lysine biosynthesis via DAP pathway; LL-2,6-diaminopimelate from (S)-tetrahydrodipicolinate (succinylase route): step 1/3. The chain is 2,3,4,5-tetrahydropyridine-2,6-dicarboxylate N-succinyltransferase from Ruegeria pomeroyi (strain ATCC 700808 / DSM 15171 / DSS-3) (Silicibacter pomeroyi).